The primary structure comprises 605 residues: MYLNALAKVRRGGGGGRPAAGGRPAAGGRPAAGGRPAAGSRAAAGAAGPPKPAKTVRGTVRPRGFGGGRFPPRRFPPAPVDEATREAEKILKSIHAHKVVKLPAQRKKHRGLYKTVRHTMPPDYIPVLGAEVLAGISSPDVMQAVLRIAPTRDNTQAADAMLCATILRAMPYKMVHPFLDMAAEGKDRHANVVLRDTFFPQNARTMDEFKAFMRRRAPDCPSPRTPMVKPPFRIPDAKPGLTPSVRNPRLNIPETAMVSIMTSAPWVAGHSIKGTVLPEGSTGALRGGLASRRWYVDNWVSVRMMGNPPVEYLTFSGKRIPETREMYDAYVRHLQSFGATAVSSSPSPPPNGDAATALANMYVDTGPEYLAALVRALPSGSGAEYEAALAYTVARAVPVFSNGETLHQIRLREGRYRPDGVHGLSDDIAFAEVYSDPDMVAEWKPRLDRIIKARVSEVIAAYRRLATGDLTAKRTPELALSSRIPAPAGLLFPKAFGESAVIRTSRGRRLVIARARRDAPAVLTDLLSVLITPMYPATAEPQRVASDDPTVLGDEPVAAAVEEPRGQAFRRKWGRGVGGKLLDALENYMDAIQQGRLPPYDNDME.

Disordered regions lie at residues 10–78 (RRGG…FPPA) and 216–248 (RAPD…VRNP). Residues 20–48 (AGGRPAAGGRPAAGGRPAAGSRAAAGAAG) are compositionally biased toward low complexity. The span at 220–233 (CPSPRTPMVKPPFR) shows a compositional bias: pro residues.

This is an uncharacterized protein from Dryophytes versicolor (chameleon treefrog).